Consider the following 155-residue polypeptide: SsrA-binding protein (155 aa).

Belongs to the SmpB family.

The protein localises to the cytoplasm. In terms of biological role, required for rescue of stalled ribosomes mediated by trans-translation. Binds to transfer-messenger RNA (tmRNA), required for stable association of tmRNA with ribosomes. tmRNA and SmpB together mimic tRNA shape, replacing the anticodon stem-loop with SmpB. tmRNA is encoded by the ssrA gene; the 2 termini fold to resemble tRNA(Ala) and it encodes a 'tag peptide', a short internal open reading frame. During trans-translation Ala-aminoacylated tmRNA acts like a tRNA, entering the A-site of stalled ribosomes, displacing the stalled mRNA. The ribosome then switches to translate the ORF on the tmRNA; the nascent peptide is terminated with the 'tag peptide' encoded by the tmRNA and targeted for degradation. The ribosome is freed to recommence translation, which seems to be the essential function of trans-translation. The sequence is that of SsrA-binding protein from Streptococcus pyogenes serotype M18 (strain MGAS8232).